The sequence spans 50 residues: MARYRCCRSQSRSRCRRRRRRCRTRRRRCCRRRRRRVCCRRYTVVRCRRR.

The protein belongs to the protamine P1 family. In terms of tissue distribution, testis.

It localises to the nucleus. The protein localises to the chromosome. Functionally, protamines substitute for histones in the chromatin of sperm during the haploid phase of spermatogenesis. They compact sperm DNA into a highly condensed, stable and inactive complex. In Chilonatalus micropus (Cuban funnel-eared bat), this protein is Sperm protamine P1 (PRM1).